The following is a 623-amino-acid chain: Prothrombin (623 aa).

A signal peptide spans 1-24 (MAHVGGLWLHGCLALAVLVSLVHS). The propeptide occupies 25–43 (QHVFMAPQQALSLLQRARR). The 47-residue stretch at 44–90 (ANSGFFEEMRKGNLERECVEEQCSREEAYEALESPSETDAFWAKYTA) folds into the Gla domain. Glutamate 50, glutamate 51, glutamate 58, glutamate 60, glutamate 63, glutamate 64, glutamate 69, glutamate 70, glutamate 73, and glutamate 76 each carry 4-carboxyglutamate. A disulfide bridge links cysteine 61 with cysteine 66. Intrachain disulfides connect cysteine 91–cysteine 104, cysteine 109–cysteine 187, cysteine 130–cysteine 170, cysteine 158–cysteine 182, cysteine 214–cysteine 292, cysteine 235–cysteine 275, cysteine 263–cysteine 287, cysteine 337–cysteine 483, cysteine 392–cysteine 408, cysteine 537–cysteine 551, and cysteine 565–cysteine 595. Kringle domains are found at residues 108–187 (NCAE…IPVC) and 213–292 (TCVP…LDYC). 2 N-linked (GlcNAc...) asparagine glycosylation sites follow: asparagine 120 and asparagine 144. The Peptidase S1 domain maps to 365-619 (IVEGSDAEIG…LKKWMQKVID (255 aa)). Residue histidine 407 is the Charge relay system of the active site. An N-linked (GlcNAc...) asparagine glycan is attached at asparagine 417. Catalysis depends on aspartate 463, which acts as the Charge relay system. Residues 552–574 (AGYKPDEGKRGDACEGDSGGPFV) form a high affinity receptor-binding region which is also known as the TP508 peptide region. Serine 569 acts as the Charge relay system in catalysis.

It belongs to the peptidase S1 family. As to quaternary structure, heterodimer (named alpha-thrombin) of a light and a heavy chain; disulfide-linked. Forms a heterodimer with SERPINA5. In plasma, interacts (via N-terminus) with alpha-1-microglobulin; this interaction does not prevent the activation of prothrombin to thrombin. The gamma-carboxyglutamyl residues, which bind calcium ions, result from the carboxylation of glutamyl residues by a microsomal enzyme, the vitamin K-dependent carboxylase. The modified residues are necessary for the calcium-dependent interaction with a negatively charged phospholipid surface, which is essential for the conversion of prothrombin to thrombin. Post-translationally, in the penultimate step of the coagulation cascade, prothrombin is converted to thrombin by the prothrombinase complex composed of factor Xa (F10), cofactor Va (F5), and phospholipids. This activation requires factor Xa-catalyzed sequential cleavage at 2 sites, Arg-315 and Arg-364, along 2 possible pathways. In the first pathway, the first cleavage occurs at Arg-315, leading to the formation of the inactive intermediate prethrombin-2. This pathway preferentially occurs on platelets and in the absence of cofactor Va. In the second pathway, the first cleavage occurs at Arg-364, which separates protease domain into 2 chains that remain connected through a disulfide bond and generates the active intermediate meizothrombin. The presence of cofactor Va directs activation along the meizothrombin pathway and greatly accelerates the rate of cleavage at Arg-364, but has a smaller effect on the cleavage of meizothrombin at Arg-315. Meizothrombin accumulates as an intermediate when prothrombinase is assembled on the membrane of red blood cells.

The enzyme catalyses Selective cleavage of Arg-|-Gly bonds in fibrinogen to form fibrin and release fibrinopeptides A and B.. With respect to regulation, activity is promoted in the presence of negatively charged surfaces, such as polyphosphate and dextran sulfate. Inhibited by SERPINA5. Thrombin, which cleaves bonds after Arg and Lys, converts fibrinogen to fibrin and activates factors V, VII, VIII, XIII, and, in complex with thrombomodulin, protein C. Functions in blood homeostasis, inflammation and wound healing. Activates coagulation factor XI (F11); activation is promoted by the contact with negatively charged surfaces. Triggers the production of pro-inflammatory cytokines, such as MCP-1/CCL2 and IL8/CXCL8, in endothelial cells. This Sus scrofa (Pig) protein is Prothrombin (F2).